The primary structure comprises 337 residues: Ketol-acid reductoisomerase (NADP(+)) (337 aa).

Residues 1 to 183 form the KARI N-terminal Rossmann domain; sequence MAIETLYDSD…GGARAGVIPT (183 aa). NADP(+) is bound by residues 26–29, Arg49, Ser52, Ser54, and 84–87; these read YGSQ and DTSQ. His109 is an active-site residue. Gly135 is a binding site for NADP(+). The KARI C-terminal knotted domain occupies 184–329; the sequence is TFKDETETDL…SQLRDLMSWV (146 aa). 4 residues coordinate Mg(2+): Asp192, Glu196, Glu228, and Glu232. Ser253 provides a ligand contact to substrate.

It belongs to the ketol-acid reductoisomerase family. Mg(2+) is required as a cofactor.

The catalysed reaction is (2R)-2,3-dihydroxy-3-methylbutanoate + NADP(+) = (2S)-2-acetolactate + NADPH + H(+). It catalyses the reaction (2R,3R)-2,3-dihydroxy-3-methylpentanoate + NADP(+) = (S)-2-ethyl-2-hydroxy-3-oxobutanoate + NADPH + H(+). Its pathway is amino-acid biosynthesis; L-isoleucine biosynthesis; L-isoleucine from 2-oxobutanoate: step 2/4. It participates in amino-acid biosynthesis; L-valine biosynthesis; L-valine from pyruvate: step 2/4. In terms of biological role, involved in the biosynthesis of branched-chain amino acids (BCAA). Catalyzes an alkyl-migration followed by a ketol-acid reduction of (S)-2-acetolactate (S2AL) to yield (R)-2,3-dihydroxy-isovalerate. In the isomerase reaction, S2AL is rearranged via a Mg-dependent methyl migration to produce 3-hydroxy-3-methyl-2-ketobutyrate (HMKB). In the reductase reaction, this 2-ketoacid undergoes a metal-dependent reduction by NADPH to yield (R)-2,3-dihydroxy-isovalerate. This Corynebacterium aurimucosum (strain ATCC 700975 / DSM 44827 / CIP 107346 / CN-1) (Corynebacterium nigricans) protein is Ketol-acid reductoisomerase (NADP(+)).